We begin with the raw amino-acid sequence, 215 residues long: Pyrrolidone-carboxylate peptidase (215 aa).

Active-site residues include Glu-78, Cys-141, and His-165.

It belongs to the peptidase C15 family. As to quaternary structure, homotetramer.

The protein resides in the cytoplasm. It catalyses the reaction Release of an N-terminal pyroglutamyl group from a polypeptide, the second amino acid generally not being Pro.. In terms of biological role, removes 5-oxoproline from various penultimate amino acid residues except L-proline. In Lactobacillus johnsonii (strain CNCM I-12250 / La1 / NCC 533), this protein is Pyrrolidone-carboxylate peptidase.